Here is a 315-residue protein sequence, read N- to C-terminus: Serine/threonine-protein phosphatase PP2A catalytic subunit 2 (315 aa).

Residues Asp-62, His-64, Asp-90, and Asn-122 each coordinate Mn(2+). The active-site Proton donor is His-123. Residues His-172 and His-247 each coordinate Mn(2+). A disordered region spans residues 294–315 (QFEPAPRENEPHTTRRVPDYFL). Over residues 298–315 (APRENEPHTTRRVPDYFL) the composition is skewed to basic and acidic residues. Leu-315 carries the post-translational modification Leucine methyl ester.

The protein belongs to the PPP phosphatase family. PP-2A subfamily. It depends on Mn(2+) as a cofactor. Post-translationally, reversibly methyl esterified on Leu-315 by leucine carboxyl methyltransferase 1 (PPM1) and protein phosphatase methylesterase 1 (PPE1). Carboxyl methylation influences the affinity of the catalytic subunit for the different regulatory subunits, thereby modulating the PP2A holoenzyme's substrate specificity, enzyme activity and cellular localization.

It catalyses the reaction O-phospho-L-seryl-[protein] + H2O = L-seryl-[protein] + phosphate. The enzyme catalyses O-phospho-L-threonyl-[protein] + H2O = L-threonyl-[protein] + phosphate. This Paramecium tetraurelia protein is Serine/threonine-protein phosphatase PP2A catalytic subunit 2 (Ppn2).